The following is a 611-amino-acid chain: MARQKLTFKEQMDGFPWVQLVVVSLVRFSEPIAFSSLFPYVYFMVRDFNIAPNDAQVSKYSGYLSSSFALCQVISAYHWGRFSEKHGRKITLTCGLIGTSVSLLILGFSRNFYQALVARSLMGLLNGNVGVIRTIIGEIATERKHQALAFSTMPLLFQFGAVVGPMIGGFLVFRDGTMNEVPLWFPHFAKRIIRSYPYALPNVVVCMFLMFGLTNATLFLEETHPAFKDRRDYGLEVGDFIKKNIFGIQPKRRPWQKRIQDDSENIHHRNENVNSIRGQDSEEDENSPLVNTTNDDDTESIQSIDPILTRRQSVGLIRTYSLHEPTDAVHANIDTAPDGCKESSIFHHVFHTKVFYPISVNFIMALHLIVYNEFLPVFLAYDLAVDPENPKKLASKFPWKISGGIGYEPEQTGTLLSTTGIFGCFVVIFIFPIVDRNFDCLTIFRTLVKLYPIMYVMVPYVVFLQNERIPSWYTVVYLYIITGIKTFCGALTSPQIMLLIHNSSPLSCRSVINGATISISASARFIGPLVWGYIMSWSQQNDVAWVSWWSLSLFCMVALYQSYKIAPIDDNENELHGQGSEDAYNSQSQSSDLRMAHRSSLSSLSNQRCTT.

The Extracellular segment spans residues 1–89 (MARQKLTFKE…GRFSEKHGRK (89 aa)). A helical transmembrane segment spans residues 90–110 (ITLTCGLIGTSVSLLILGFSR). Over 111–152 (NFYQALVARSLMGLLNGNVGVIRTIIGEIATERKHQALAFST) the chain is Cytoplasmic. A helical membrane pass occupies residues 153–173 (MPLLFQFGAVVGPMIGGFLVF). Residues 174 to 199 (RDGTMNEVPLWFPHFAKRIIRSYPYA) are Extracellular-facing. A helical transmembrane segment spans residues 200 to 220 (LPNVVVCMFLMFGLTNATLFL). Over 221–353 (EETHPAFKDR…SIFHHVFHTK (133 aa)) the chain is Cytoplasmic. The segment covering 261-271 (DDSENIHHRNE) has biased composition (basic and acidic residues). Positions 261–301 (DDSENIHHRNENVNSIRGQDSEEDENSPLVNTTNDDDTESI) are disordered. Position 313 is a phosphoserine (Ser-313). Residues 354–372 (VFYPISVNFIMALHLIVYN) traverse the membrane as a helical segment. Residues 373–413 (EFLPVFLAYDLAVDPENPKKLASKFPWKISGGIGYEPEQTG) are Extracellular-facing. The helical transmembrane segment at 414 to 434 (TLLSTTGIFGCFVVIFIFPIV) threads the bilayer. Residues 435–442 (DRNFDCLT) are Cytoplasmic-facing. The helical transmembrane segment at 443-463 (IFRTLVKLYPIMYVMVPYVVF) threads the bilayer. Residues 464–542 (LQNERIPSWY…YIMSWSQQND (79 aa)) lie on the Extracellular side of the membrane. A helical membrane pass occupies residues 543-563 (VAWVSWWSLSLFCMVALYQSY). At 564–611 (KIAPIDDNENELHGQGSEDAYNSQSQSSDLRMAHRSSLSSLSNQRCTT) the chain is on the cytoplasmic side. Ser-603 is modified (phosphoserine).

The protein belongs to the major facilitator superfamily.

Its subcellular location is the membrane. The enzyme catalyses chloride(in) = chloride(out). Functionally, outward-rectifying chloride channel involved in chloride homeostasis. This Saccharomyces cerevisiae (strain ATCC 204508 / S288c) (Baker's yeast) protein is Major facilitator superfamily domain-containing protein YCR023C.